The chain runs to 107 residues: Cytochrome c2 (107 aa).

Heme c-binding residues include cysteine 14, cysteine 17, histidine 18, and methionine 80.

Belongs to the cytochrome c family. Post-translationally, binds 1 heme c group covalently per subunit.

Cytochrome c2 is found mainly in purple, non-sulfur, photosynthetic bacteria where it functions as the electron donor to the oxidized bacteriochlorophyll in the photophosphorylation pathway. However, it may also have a role in the respiratory chain and is found in some non-photosynthetic bacteria. The protein is Cytochrome c2 of Rhodoblastus acidophilus (Rhodopseudomonas acidophila).